The sequence spans 1420 residues: Apolipoprotein(a) (1420 aa).

Residues 19–30 (TAVAPPNVTPVP) show a composition bias toward low complexity. The interval 19-46 (TAVAPPNVTPVPSLEAPSEQAPTEQRPG) is disordered. Kringle domains follow at residues 49–127 (ECYH…LTQC), 163–241 (ECYH…LTQC), 277–355 (ECYH…LTQC), 391–469 (ECYH…LTRC), and 505–583 (ECYY…LTQC). Cystine bridges form between C50/C127, C71/C110, C99/C122, C164/C241, C185/C224, C213/C236, C278/C355, C299/C338, C327/C350, C392/C469, C413/C452, C441/C464, C506/C583, C527/C566, and C555/C578. A disordered region spans residues 598–617 (PDPSTQASSEEAPTEQSPEV). The span at 600–616 (PSTQASSEEAPTEQSPE) shows a compositional bias: polar residues. Kringle domains follow at residues 619–697 (DCYH…LTQC), 725–803 (DCYH…LTQC), 839–917 (DCYQ…LTQC), 953–1031 (DCYH…LTQC), and 1067–1145 (QCYH…LTRC). Cystine bridges form between C620-C697, C641-C680, C669-C692, C726-C803, C747-C786, C775-C798, C840-C917, C861-C900, C889-C912, C954-C1031, C975-C1014, C1003-C1026, C1068-C1145, C1089-C1128, C1117-C1140, C1217-C1233, C1309-C1376, C1339-C1355, and C1366-C1394. The Peptidase S1 domain occupies 1191–1418 (IVGGCVAHPH…FVTWIEGVMR (228 aa)).

The protein belongs to the peptidase S1 family. Plasminogen subfamily. Disulfide-linked to apo-B100. Binds to fibronectin and decorin. N- and O-glycosylated.

Apo(a) is the main constituent of lipoprotein(a) (Lp(a)). It has serine proteinase activity and is able of autoproteolysis. Inhibits tissue-type plasminogen activator 1. Lp(a) may be a ligand for megalin/Gp 330. The protein is Apolipoprotein(a) (LPA) of Macaca mulatta (Rhesus macaque).